Here is a 270-residue protein sequence, read N- to C-terminus: MAVITKIEVQKRSKERFNIYIDKGQGEEYGFSVNEVILIKHGLQKGLEIDEIALGNILYNEEVQKAYLQAISYLSYQMRTKLEIEDFLRKKEVGQAIISEVVSKLLHDRYINDKEYAILYTRTQSNVNRKGPTVIKRELLNKGVQDLIITHSLQEYPKEKQIENALILIEKKKKSYQKHSFLQMKLKLDEMLVRKGYSRDVIQICLEELKDEKDDEKQREALHYHGNKYYEKYKKYDGWTFENKMKQALYRKGFSIDEIEIFLQMKREEG.

This sequence belongs to the RecX family.

It localises to the cytoplasm. Its function is as follows. Modulates RecA activity. The sequence is that of Regulatory protein RecX from Bacillus cereus (strain AH187).